The following is a 246-amino-acid chain: Dehydration-responsive element-binding protein 1H (246 aa).

A disordered region spans residues 1 to 43; the sequence is MDMAGHEVNSSSSSSGAESSSSSSGRQQYKKRPAGRTKFRETR. Residues 10–24 are compositionally biased toward low complexity; that stretch reads SSSSSSGAESSSSSS. Residues 28–37 are compositionally biased toward basic residues; that stretch reads QYKKRPAGRT. The segment at residues 46 to 110 is a DNA-binding region (AP2/ERF); the sequence is VYRGVRRRGG…GGGAACLNFQ (65 aa). Positions 155 to 187 are disordered; that stretch reads AMDEATSGVSAPPPLANNAGSSETPGPSSIDGT. Residues 172–181 are compositionally biased toward polar residues; the sequence is NAGSSETPGP.

It belongs to the AP2/ERF transcription factor family. ERF subfamily.

The protein localises to the nucleus. Its function is as follows. Transcriptional activator that binds specifically to the DNA sequence 5'-[AG]CCGAC-3'. Binding to the C-repeat/DRE element mediates high salinity- and dehydration-inducible transcription. In Oryza sativa subsp. indica (Rice), this protein is Dehydration-responsive element-binding protein 1H (DREB1H).